The primary structure comprises 63 residues: MKVTVDQDLCIACGTCIDLCPSVFDWDDEGLSHVIVDEVPEGAEDSCARESVNECPTEAIKEV.

The 28-residue stretch at Lys-2–Glu-29 folds into the 4Fe-4S ferredoxin-type domain. Residues Cys-10, Cys-13, Cys-16, and Cys-55 each contribute to the [4Fe-4S] cluster site.

Requires [4Fe-4S] cluster as cofactor.

Functionally, ferredoxins are iron-sulfur proteins that transfer electrons in a wide variety of metabolic reactions. The sequence is that of Ferredoxin from Moorella thermoacetica (Clostridium thermoaceticum).